The following is a 4306-amino-acid chain: MAGSLSDVRKLFLFTTTQNYFGLRPELWDQTPLSNCPEVNNFLDDGNQMLLRVQRSDAGLAFSNTIDFDDTKDKVLVFFKLRPEVITDGNLHTNILVSSMLESPINSLYQAVRQVFAPMLLKDQEWSRNFDPKLQNLLSELEAGLGVVLRKSDTNLPKLKLKEDDTRGILTPSDEFQFWIEQAHRGSKQISKERASYFKELFETIAREFYNLDSLSLLEVVDLVETTRDVVDDVWRQAEHDHYPESRMLHLLDVIGGSFGRFVQKKLGSLKLWEDPYYLVKENLKAGISICEQWVIVCSHLTGQVWQRYVPHPWKSEKYFPETLDRLGKRLEEVLAIRTIHEKLLYFLPASEERIVCLSRVFEPFTGVNPVQYNPYTEPLWKAAVSQYEKIIAPAEQKIAGKLKNYISEIQDSPQQLLQAFLKYKELVKRPTISKELMLERETLLARLGDSAKDFRLDFENRCRGIPGDASGPLSGKNLSEVVNNIVWVRQLELKVDDTIKIAEALLSDLSGFRSFHRSAEDLLDQFKLYEQEQFDDWSREVQSGLSDSRSGLCIEANSRIMELDPNDGALKVHYSDRLVILLREVRQLSALGFVIPAKIQQVANVAQKFCKQAIILKQVAHFYNSIDQQMIQSQRPMMLQSALAFEQIIKNSKAGSGGKSQITWDNPKELEGYIQKLQNAAERLATENRRLRKWHITFCEKVVILMNIDLLRQQQRWKDGLQELRTGLASVAAQGFQPSDMRAWRQHWNHQLYKALEHQYQMGLEALNENLPEINVDLTYKQGRLQFRPPFEEIRAKYYREMKRFIGIPNQFKGVGGAGDESIFSVMIDRNASGFLTIYSKAEDLFRRLSAVLHQHKEWVVIGQVDMEALVEKNLSTVHDWEKNFKALKIKGKEVERLPSAVKVDCLNINCSPVKTVIDDLIQKLFDLLVLSLKKSIQTHIHEIDTFVTEAMKVLTVIPQSVEEIGDTNLQYSNLQDRRPEILPLFQEAEDKNRLLRTVAGGGVETVSNLRAKWDKFELMMESHQLMIKDQIEVMKGNVKSRLQIYYQELDKFKARWDQLKPGDDIIETGQQNTMDQSAKSIKEKKIEFDDLEVIRKKLVDDCHHFGLEESNFSLAYSISKDIESCAQIWALYEEFQQGLQEMAKEDWITYRTKIYIFEEFLINWHERLRKVEEHSVMTVKLQSEVDRYKIIIPILKYVRGEHLSPDHWLDLFRLLGLPRGTSLEKLLFGDLLRVADTIVEKASDLKDLNSRAQGEVTIREALRELDLWGVGAVFSLIDYEDSQNRTIKLIKDWKDIVNQVGDNRCLLQSLKDSPYYKGFEDKVSIWERKLAQLDEYLQNLNHIQRKWVYLEPIFGRGALPKEQTRFNKVDEDFRSIMMDIRKDSRVTTLTTHAGIRNTLLTILDQLQRCQKSLNEFLEEKRSAFPRFYFIGDDDLLEILGQSTNPSVIQSHLKKLFAGINSVCFDEESKHITAMRSLEGEVVPFKSKVLLSNNVEAWLNDLALEMKQTLKQLLKECVTAGRSSQGAIDPSLFPSQILCLAEQIKFTEDVEDAIRDHSLHQIEAQLAAKLERYTSVDTSSEDPGNSESGILELKLKTLILDIIHNIDIVKQLNQAQVHTTDDWAWKKQVRFYMKSDHTCYVQMVDSELQYTYEYQGNAPKLVYTPLTDKCYLTLTQAMKMGLGGNPYGPAGTGKTESVKALGGLLGRQVLVFNCDEGIDVKSMGRIFVGLVKCGAWGCFDEFNRLEEAVLSAVSMQIQTIQDALKNHRSVCELLGKEVEVNANSGIFITMNPAGKGYGGRQKLPDNLKQLFRPVAMSRPDNDLIAEVILYSEGFKDAKELGRKLVAIFNLSRELLTPQQHYDWGLRALKTVLRGSGNLLRQLKKSGTKQDVNENHIVVQALRLNTMSKFTFADCTRFDALIKDVFPGIDFKEVEYNELSSALKQVFEEANYEVIPNQMKKALELYEQLRQRTGVVIVGPSGAGKSTLWRMLRAALCKIGKVVKQYTMNPKAMPRHQLLGHIDMDTREWSDGVLTNSARQVVREPQDVSSWIICDGDIDPEWIESLNSVLDDNRLLTMPSGERIQFGPNVNFVFETHDLSCASPATISRMGMIFLSDEETDLNSLIKSWLRNQPVEYRSNLENWIGDYFSKALQWVLKQNDYVVETSLVGTVMNGLSHLHGCKYHDQFIINLIRGLGGNLNMKSRLEFTKEVFNWARETPPDSHRPMDTYFDCDRGQLASYVLKKPESLTADDFSSGHSLPVIQTPDMQRGLDYFKPWLSSETKQPFILVGPEGCGKGMLLRYAFSQLRSTEIATIHCSAQTTSRHLLQKLSQTCMVISTNTGRVYRPKDCERLVLYLKDINLPKLDKWGTSTLVAFLQQVLTYQGFYDENLEWVGLENIQIVASMSAGGRLGRHKLTTRFTSIVRLCAVDYPEREQLQTIYGAYLEAVLHKNLKNHSIWGSSSKIYLLAGSMVQVYEQVRAKFTVDDYSHYFFTPCILTQWVLGLFRYDLEGGSSNHPLDYVLEVVAYEARRLFRDKIVGVKELHLFDNILTSVLQGDWGSDILDNMADSFYVTWGAQHISGAKIAPGQPLPPHGKPLGKLSSADLKDVIKKGLIHYGRDNQNLDILLFQEVLEYMSRIDRVLSFPGGSLLLAGRSGVGRRTVTSLVSHMHGAVLFSPKISRGYEPKQFRTDLKHVLHLAGIEAQQVVLLLEDYQFVHPTFLEMINSLLSSGEVPGLYTLEELEPLLLPLKDQASQDGFFGPVFNYFTYRIQQNLHIVLIMDSANLNFIINCESNPALHKKCRVLWMEGWSDSSMKKIPEMLFSEADIEEKYEKKRKDEKKKSSVDPDFIKSFLLIHESCKAYGATPSRYMTFLRVYSAISSSKRKELLKRQSHLQAGVSKLNEAKALVDELNRKAGEQSILLRIKQDEADSALQEITVSMQDASEQKTELERLKHRIAEEVVKIEERKSKIDDELKEVQPLVNEAKLAVGNIRPESLSEIRSLRMPPDVIRDILEGVLRLMGIFDTSWVSMKSFLAKRGVREDIATFDARNIPKEIRESVEELLFKNKASFDPKNAKRASTAAAPLAAWVKANVQYSHVLERIQPLETEQSGLELNLKKTEDRKRKLEDLLNSVGQKVSELKEKFQSRTSEAAKLEAEVSKAQETIKAAEVLISQLDREHRRWNAQVAEIAEELATLPKRAQLAAAFITYLSAAPEGLRKNCLEEWTKAAGLEKFDLRRFLCTESEQLIWKSEGLPSDDLSIENALVILQSRVCPFLIDPSSQATEWLKTHLKDSHLEVINQQDSNFITALELAVRFGKTLIIQEMDGVEPVLYPLLRRDLVAQGPRYVVQIGDKIIDYNEDFRLFLSTRNPNPFIPPDAASIVTEVNFTTTRSGLRGQLLALTIQHEKPDLEEQKTKLLQQEEDKKIQLARLEESLLETLATSQGNILENKDLIESLNQTKASSALIQDSLKESYKLQISLDRERDAYLPLAESASKMYFIISDLSKINNMYRFSLASFLRLFQRALQNKQDSESTEQRIQCLVNSLKHMVYEYICRCLFKADQLMFALHFVRGMHPEFFQENEWDTFTGVVVGDMLRKADSQQRIRDQLPSWIDQERSWAVATLKISLPGLYQTLCFEDGTLWRTYYHHSMCEQEFPSILAKKVSLFQQVLVVQALRPDRLQSAMALFACKALGLKELSPLPLNLKRLYKETLEIEPILIIISPGADPSQELQELANAERSSERYHQVAMGQGQADLAIQMLKECARNGDWLCLKNLHLVVSWLPVLEKELNTLQPKESFRLWLTAEVHPNFTPILLQSSLKITYESPPGLKKNLMRTYESWTPEQISKKDNIHRAHALFSLAWFHAACQERRNFIPQGWTKFYEFSLSDLRAGYHVIDRLFDGSKDVQWEFVHGLLENSIYGGRIDNYFDLRVLQSYLKQFFNSSIIDVLNQRNKKSIFPYSISLPDSCSILDYRAVIEKLPEDDKPSFFGLPANIARSSQRMTSSQVISQLRILGRSVTAGCKFDREIWSNELSPVLNLWKKLNQNSNLIHQKVSPPNDRQGSPILSFIILEQFNAIRLVQSVHQSLAALSKVIRGTTLLSSEVQKLASALLNQKCPLTWQSKWEGPEDPLQYLRGLVARTLAIQNWVEKAEKQALLADTLDLSELFHPDTFLNALRQETARATGCSVDSLKFVASWKGRLQEAKLQIKISGLLLEGCSFDGSRLSENQHDSPSVSSVLPCYMGWTPQGSYGPYSPDECISLPVYTSAERDCVVTNIDVPCGGNQDQWIQCGAALFLKNQ.

Positions 1 to 1650 (MAGSLSDVRK…YVQMVDSELQ (1650 aa)) are stem. An ATP-binding site is contributed by 145–152 (LGVVLRKS). A coiled-coil region spans residues 669 to 696 (KELEGYIQKLQNAAERLATENRRLRKWH). AAA regions lie at residues 1651–1875 (YTYE…VLRG), 1941–2161 (SALK…KQND), 2249–2505 (LTAD…WVLG), and 2617–2862 (HYGR…ESCK). ATP is bound by residues 1689–1696 (GPAGTGKT), 1979–1986 (GPSGAGKS), 2291–2298 (GPEGCGKG), and 2655–2662 (GRSGVGRR). The segment at 2880-3168 (AISSSKRKEL…AEVSKAQETI (289 aa)) is stalk. Coiled coils occupy residues 2896–2981 (LQAG…KEVQ), 3108–3199 (LETE…LATL), and 3407–3441 (IQHE…SLLE). AAA stretches follow at residues 3243–3472 (LCTE…LIQD) and 3689–3904 (MALF…VIDR).

Belongs to the dynein heavy chain family. The cytoplasmic dynein complex 2 is probably composed by a heavy chain DYNC2H1 homodimer and a number of DYNC2LI1 light intermediate chains. As to expression, widely expressed both in ciliated and unciliated tissues. Detected in brain and testis (at protein level).

It localises to the cytoplasm. The protein resides in the cytoskeleton. It is found in the cilium axoneme. The protein localises to the cell membrane. May function as a motor for intraflagellar retrograde transport. Functions in cilia biogenesis. May play a role in transport between endoplasmic reticulum and Golgi or organization of the Golgi in cells. This chain is Cytoplasmic dynein 2 heavy chain 1 (Dync2h1), found in Rattus norvegicus (Rat).